We begin with the raw amino-acid sequence, 207 residues long: Ribosomal RNA small subunit methyltransferase G (207 aa).

S-adenosyl-L-methionine-binding positions include Gly75, Leu80, 126–127, and Arg141; that span reads VE.

It belongs to the methyltransferase superfamily. RNA methyltransferase RsmG family.

The protein localises to the cytoplasm. It carries out the reaction guanosine(527) in 16S rRNA + S-adenosyl-L-methionine = N(7)-methylguanosine(527) in 16S rRNA + S-adenosyl-L-homocysteine. In terms of biological role, specifically methylates the N7 position of guanine in position 527 of 16S rRNA. This Psychromonas ingrahamii (strain DSM 17664 / CCUG 51855 / 37) protein is Ribosomal RNA small subunit methyltransferase G.